Here is a 708-residue protein sequence, read N- to C-terminus: Leucine-rich repeat neuronal protein 3 (708 aa).

The signal sequence occupies residues 1-22 (MKDMPLRIHVLLGLAITTLVQA). The region spanning 23–69 (VDKKVDCPRLCTCEIRPWFTPRSIYMEASTVDCNDLGLLTFPARLPA) is the LRRNT domain. The Extracellular portion of the chain corresponds to 23–628 (VDKKVDCPRL…KEYEKNNTTT (606 aa)). 12 LRR repeats span residues 70–91 (NTQILLLQTNNIAKIEYSTDFP), 93–114 (NLTGLDLSQNNLSSVTNINVKK), 117–138 (QLLSVYLEENKLTELPEKCLSE), 141–162 (NLQELYINHNLLSTISPGAFIG), 165–186 (NLLRLHLNSNRLQMINSKWFDA), 189–210 (NLEILMIGENPIIRIKDMNFKP), 213–234 (NLRSLVIAGINLTEIPDNALVG), 237–258 (NLESISFYDNRLIKVPHVALQK), 261–282 (NLKFLDLNKNPINRIRRGDFSN), 285–304 (HLKELGINNMPELISIDSLA), 310–332 (DLRKIEATNNPRLSYIHPNAFFR), and 335–358 (KLESLMLNSNALSALYHGTIESLP). 2 N-linked (GlcNAc...) asparagine glycosylation sites follow: N93 and N103. N-linked (GlcNAc...) asparagine glycosylation is present at N223. One can recognise an LRRCT domain in the interval 368-421 (NPIRCDCVIRWMNMNKTNIRFMEPDSLFCVDPPEFQGQNVRQVHFRDMMEICLP). N-linked (GlcNAc...) asparagine glycosylation is present at N382. In terms of domain architecture, Ig-like C2-type spans 421–514 (PLIAPESFPS…DLKSVMIKVD (94 aa)). C444 and C496 are disulfide-bonded. Residues N522, N579, N608, N624, and N625 are each glycosylated (N-linked (GlcNAc...) asparagine). Residues 523–617 (GSLNIKIRDI…NVTTKGLHPD (95 aa)) form the Fibronectin type-III domain. The chain crosses the membrane as a helical span at residues 629–649 (LMACLGGLLGIIGVICLISCL). At 650–708 (SPEMNCDGGHSYVRNYLQKPTFALGELYPPLINLWEAGKEKSTSLKVKATVIGLPTNMS) the chain is on the cytoplasmic side.

It localises to the membrane. The sequence is that of Leucine-rich repeat neuronal protein 3 (LRRN3) from Homo sapiens (Human).